The following is an 824-amino-acid chain: Glycerol-3-phosphate acyltransferase (824 aa).

An HXXXXD motif motif is present at residues 302–307 (CHRSHM).

This sequence belongs to the GPAT/DAPAT family.

The protein resides in the cell inner membrane. The catalysed reaction is sn-glycerol 3-phosphate + an acyl-CoA = a 1-acyl-sn-glycero-3-phosphate + CoA. The protein operates within phospholipid metabolism; CDP-diacylglycerol biosynthesis; CDP-diacylglycerol from sn-glycerol 3-phosphate: step 1/3. The polypeptide is Glycerol-3-phosphate acyltransferase (Actinobacillus pleuropneumoniae serotype 7 (strain AP76)).